The following is a 651-amino-acid chain: Peptidoglycan D,D-transpeptidase MrdA (651 aa).

Residues L30–L50 form a helical membrane-spanning segment. S338 serves as the catalytic Acyl-ester intermediate.

The protein belongs to the transpeptidase family. MrdA subfamily.

The protein resides in the cell inner membrane. It carries out the reaction Preferential cleavage: (Ac)2-L-Lys-D-Ala-|-D-Ala. Also transpeptidation of peptidyl-alanyl moieties that are N-acyl substituents of D-alanine.. The protein operates within cell wall biogenesis; peptidoglycan biosynthesis. Catalyzes cross-linking of the peptidoglycan cell wall. The chain is Peptidoglycan D,D-transpeptidase MrdA from Haemophilus influenzae (strain ATCC 51907 / DSM 11121 / KW20 / Rd).